The sequence spans 406 residues: MTSGVKKVVLAYSGGLDTSVILKWLQETYRCEVVTFTADLGQGEELEPARAKAQMLGIRPENIFIDDLREEFVRDFVFPMFRANTLYEGTYLLGTSIARPLISKRQIEIANLVGADAVAHGATGKGNDQVRFELGYYALKPDVRVIAPWREWQLNSRTALLDFAEKHQIPIAKDKRGEAPYSTDANLLHISYEGKALEDPWVEPDEDMFTRSVAPEKAPDEPEYVEIEFAKGDPVAVNGQRLSPAALLTELNRLGGKHGIGRLDLVENRFVGMKSRGVYETPGGTLLSVAHRGMESITLDREAMHLKDEVMPRYAKLIYNGFWFSPEREALQALIDSTQARVNGVVRLKLFKGSARVVGRQSPNSLYRLDYVTFEADSVYNQKDAEGFIKLNALRLRLGTIAKQKG.

Residues 11 to 19 (AYSGGLDTS) and Ala38 each bind ATP. Positions 91 and 96 each coordinate L-citrulline. Residue Gly121 participates in ATP binding. Thr123, Asn127, and Asp128 together coordinate L-aspartate. Asn127 contributes to the L-citrulline binding site. Residues Arg131, Ser182, Ser191, Glu267, and Tyr279 each coordinate L-citrulline.

Belongs to the argininosuccinate synthase family. Type 1 subfamily. In terms of assembly, homotetramer.

The protein localises to the cytoplasm. The enzyme catalyses L-citrulline + L-aspartate + ATP = 2-(N(omega)-L-arginino)succinate + AMP + diphosphate + H(+). The protein operates within amino-acid biosynthesis; L-arginine biosynthesis; L-arginine from L-ornithine and carbamoyl phosphate: step 2/3. In Rhodospirillum centenum (strain ATCC 51521 / SW), this protein is Argininosuccinate synthase.